Consider the following 130-residue polypeptide: Ribonuclease VapC22 (130 aa).

The PINc domain maps to 4–119 (VLLDSHVAYW…RLVTKDRRLR (116 aa)). 2 residues coordinate Mg(2+): Asp-7 and Asp-97.

The protein belongs to the PINc/VapC protein family. Mg(2+) is required as a cofactor.

The protein localises to the secreted. Toxic component of a type II toxin-antitoxin (TA) system. An RNase. Upon expression in M.smegmatis inhibits translation and colony formation. Its toxic effect on colony formation is neutralized by coexpression with cognate antitoxin VapB22; the effect on translation has not been tested but is probably neutralized also. This is Ribonuclease VapC22 from Mycobacterium tuberculosis (strain ATCC 25618 / H37Rv).